We begin with the raw amino-acid sequence, 2359 residues long: MWNIDGTSLAPPGTDGSRMQTPSHPADHPSYTAPSNRNTPTVPTPEDAEAKLEKKARTWMQLNSKRYGDKRKFGFVETQKEDMPPEHVRKIIRDHGDMSSKKHRLDKRVYLGALKFVPHAVFKLLENMPMPWEQVRDVKVLYHITGAITFVNEVRWVVEPIYMAQWGSMWIMMRREKRDRRHFKRMRFPPFDDEEPPLDYADNLLDVDPLEAIQLELDEEEDSAVYSWFYDHKPLVKTKMINGPSYQTWNLSLPIMSTLHRLAAQLLSDLVDRNYFYLFDMPSFFTAKALNMCIPGGPKFEPLHRDMEKGDEDWNEFNDINKLIIRSPLRTEYKVAFPHLYNNRPRKVKLCVYHTPMVMYIKTEDPDLPAFYYDPLIHPISNSNNTNKEQRKSNGYDDDGDDFVLPEGLEPLLNNSPLYTDTTAPGISLLFAPRPFNMRSGRTRRAEDIPLVAEWFKEHCPPAYPVKVRVSYQKLLKCYLLNELHHRPPKAQKKKHLFRSLAATKFFQSTELDWVEVGLQVCRQGYNMLNLLIHRKNLNYLHLDYNFNLKPVKTLTTKERKKSRFGNAFHLCREILRLTKLVVDANVQFRLGNVDAFQLADGLQYIFSHVGQLTGMYRYKYRLMRQIRMCKDLKHLIYYRFNTGPVGKGPGCGFWAPMWRVWLFFLRGIVPLLERWLGNLLARQFEGRHSKGVAKTVTKQRVESHFDLELRAAVMHDVVDAMPEGIKQNKARTILQHLSEAWRCWKANIPWKVPGLPVAIENMILRYVKSKADWWTNVAHYNRERIRRGATVDKTVCRKNLGRLTRLWLKAEQERQHNFQKDGPYVTADEGIAIYSTTVNWLESRKFSAIPFPPLSYKHDTKLLILALERLKESYSAAVKLNQQQREELGLIEQAYDNPHEALMRIKRHLLTQHSFKEVGIEFMDLYSHLIPVYQIDPLEKITDAYLDQYLWYEGDKRHLFPNWIKPADSEPPPLLVYKWCQGINNLQGIWDTSDGQCVVMLQTKFEKLFEKIDLTVLNSLLRLVLDPKLANYVTGKNNVVLSYKDMSYTNTYGLIRGLQFASFVVQFYGLVLDLLLLGLTRASEIAGPPQRPNEFMTYWDTKVETRHPIRLYSRYIDKVHIMFKFTHEEARDLIQRHLTERPDPNNENMVGYNNKKCWPRDARMRLMKHDVNLGRSVFWDMKNRLPRSITTLEWENGFVSVYSKDNPNLLFSMCGFEVRVLPKIRMGQEAFSSTRDGVWNLQNEQTKERTAVAFLRADDEHMKVFENRVRQILMSSGSTTFTKIVNKWNTALIGLMTYFREATVHTQELLDLLVKCENKIQTRVKIGLNSKMPSRFPPVIFYTPKEIGGLGMLSMGHILIPQSDLRYSNQTDVGVSHFRSGMSHEEDQLIPNLYRYIQPWESEFIDSQRVWAEYALKRQEAQAQNRRLTLEDLEDSWDRGIPRINTLFQKDRHTLAYDKGWRVRTDFKQYQALKQNPFWWTHQRHDGKLWNLNNYRTDVIQALGGVEGILEHTLFKGTYFPTWEGLFWEKASGFEESMKYKKLTNAQRSGLNQIPNRRFTLWWSPTINRANVYVGFQVQLDLTGIYMHGKIPTLKISLIQIFRAHLWQKIHESVVMDLCQVLDQELEPLEIETVQKETIHPRKSYKMNSSCADVLLFAAHKWPMSKPSLIAESKDVFDQKASNKYWIDVQLRWGDYDSHDIERYTKAKFMDYTTDNMSIYPSPTGVIIGLDLAYNLHSAFGNWFPGSKPLLAQAMNKIMKSNPALYVLRERIRKGLQLYSSEPTEPYLSSQNYGEIFSNQIIWFVDDTNVYRVTIHKTFEGNLTTKPINGVIFIFNPRTGQLFLKIIHTSVWAGQKRLGQLAKWKTAEEVAALVRSLPVEEQPKQVIVTRKGMLDPLEVHLLDFPNIVIKGSELQLPFQACLKIEKFGDLILKATEPQMALFNIYDDWLMTVSSYTAFQRLILILRALHVNNEKAKMLLKPDMSVVTEPNHIWPSLTDDQWMKVEVALRDLILSDYAKKNKVNTSALTQSEIRDIILGAEITPPSQQRQQIAEIEKQAKEASQLTAVTTRTTNVHGDELISTTISPYEQSAFGSKTDWRVRAISATNLYLRVNHIYVNSDDIKETGYTYIMPKNILKKFICIADLRTQIAGYLYGISPPDNPQVKEIRCVVMVPQCGNHQQVQLPSSLPEHQFLDDLEPLGWIHTQPNELPQLSPQDVTFHTRVLENNKQWDAEKCIILTCSFTPGSCSLTSYKLTQAGYEWGRLNKDTGSNPHGYLPTHYEKVQMLLSDRFFGFYMVPENGPWNYNFMGANHTVSINYSLTLGTPKEYYHQVHRPTHFLQFSKMEEDGDLDRDDSFA.

Residues 1 to 50 (MWNIDGTSLAPPGTDGSRMQTPSHPADHPSYTAPSNRNTPTVPTPEDAEA) form a disordered region. The span at 32–41 (TAPSNRNTPT) shows a compositional bias: polar residues. The 132-residue stretch at 2129–2260 (TYIMPKNILK…LTSYKLTQAG (132 aa)) folds into the MPN domain.

It localises to the nucleus. Functionally, functions as a scaffold that mediates the ordered assembly of spliceosomal proteins and snRNAs. Required for the assembly of the U4/U6-U5 tri-snRNP complex. This chain is Pre-mRNA-processing-splicing factor 8B, found in Arabidopsis thaliana (Mouse-ear cress).